The primary structure comprises 252 residues: Floral homeotic protein AGAMOUS (252 aa).

The segment at 1–20 (MAYQSELGGDSSPLRKSGRG) is disordered. The region spanning 19 to 73 (RGKIEIKRIENTTNRQVTFCKRRNGLLKKAYELSVLCDAEVALIVFSSRGRLYEY) is the MADS-box domain. The stretch at 99-166 (AEINAQYYQQ…KKNELLFSEI (68 aa)) forms a coiled coil. One can recognise a K-box domain in the interval 103-193 (AQYYQQESAK…RAKIAENERN (91 aa)).

As to quaternary structure, homodimer, capable of binding to CArG-box sequences. Forms a heterodimer via the K-box domain with either SEPALATTA1/AGL2, SEPALATTA2/AGL4, SEPALLATA3/AGL9 or AGL6. Heterodimerization also seen with some other Agamous-like MADS-box proteins. Interacts with AGL15 and AGL16. Component of a complex made of FLOR1, VSP1 and AGAMOUS (AG). Binds directly with FLR1. In terms of tissue distribution, detected early in the floral meristem but mostly expressed in stamen and carpel primordia.

The protein localises to the nucleus. Its function is as follows. Probable transcription factor involved in the control of organ identity during the early development of flowers. Is required for normal development of stamens and carpels in the wild-type flower. Plays a role in maintaining the determinacy of the floral meristem. Acts as C class cadastral protein by repressing the A class floral homeotic genes like APETALA1. Forms a heterodimer via the K-box domain with either SEPALATTA1/AGL2, SEPALATTA2/AGL4, SEPALLATA3/AGL9 or AGL6 that could be involved in genes regulation during floral meristem development. Controls AHL21/GIK, a multifunctional chromatin modifier in reproductive organ patterning and differentiation. Induces microsporogenesis through the activation of SPL/NZZ. The sequence is that of Floral homeotic protein AGAMOUS (AG) from Arabidopsis thaliana (Mouse-ear cress).